Consider the following 199-residue polypeptide: Recombination protein RecR (199 aa).

A C4-type zinc finger spans residues 58–73; the sequence is CLVCGNVTGSDICPIC. The region spanning 81 to 176 is the Toprim domain; the sequence is GEICVVTDVA…AVTGLAQGVP (96 aa).

Belongs to the RecR family.

Functionally, may play a role in DNA repair. It seems to be involved in an RecBC-independent recombinational process of DNA repair. It may act with RecF and RecO. This chain is Recombination protein RecR, found in Paracoccus denitrificans (strain Pd 1222).